Reading from the N-terminus, the 521-residue chain is Glutamyl-tRNA(Gln) amidotransferase subunit B, mitochondrial (521 aa).

Residues 1-22 (MIALLRWGIARPSAPLRWSRCF) constitute a mitochondrion transit peptide.

Belongs to the GatB/GatE family. GatB subfamily. In terms of assembly, subunit of the heterotrimeric GatCAB amidotransferase (AdT) complex, composed of A, B and C subunits.

The protein resides in the mitochondrion. It catalyses the reaction L-glutamyl-tRNA(Gln) + L-glutamine + ATP + H2O = L-glutaminyl-tRNA(Gln) + L-glutamate + ADP + phosphate + H(+). Allows the formation of correctly charged Gln-tRNA(Gln) through the transamidation of misacylated Glu-tRNA(Gln) in the mitochondria. The reaction takes place in the presence of glutamine and ATP through an activated gamma-phospho-Glu-tRNA(Gln). This is Glutamyl-tRNA(Gln) amidotransferase subunit B, mitochondrial from Cryptococcus neoformans var. neoformans serotype D (strain JEC21 / ATCC MYA-565) (Filobasidiella neoformans).